The primary structure comprises 88 residues: Small ribosomal subunit protein bS16 (88 aa).

Belongs to the bacterial ribosomal protein bS16 family.

This chain is Small ribosomal subunit protein bS16, found in Leptospira interrogans serogroup Icterohaemorrhagiae serovar Lai (strain 56601).